The following is a 162-amino-acid chain: MRPEDLNDLSLLGQKSVPYIFEYQPEVLEAFPNRHPENDYFVKFNAPEFTSLCPITNQPDFATIYISYIPDEKLVESKSLKLYLFSFRNHGDFHENCINVIGKDLVKLMEPRYLEVWGKFTPRGGISIDPYYNYGKPGTKYEQMAEHRLFNHDLYPETIDNR.

Cys53 serves as the catalytic Thioimide intermediate. Asp60 functions as the Proton donor in the catalytic mechanism. Residues 75 to 77 and 94 to 95 each bind substrate; these read VES and HE.

The protein belongs to the GTP cyclohydrolase I family. QueF type 1 subfamily.

It localises to the cytoplasm. It catalyses the reaction 7-aminomethyl-7-carbaguanine + 2 NADP(+) = 7-cyano-7-deazaguanine + 2 NADPH + 3 H(+). It functions in the pathway tRNA modification; tRNA-queuosine biosynthesis. Its function is as follows. Catalyzes the NADPH-dependent reduction of 7-cyano-7-deazaguanine (preQ0) to 7-aminomethyl-7-deazaguanine (preQ1). In Exiguobacterium sibiricum (strain DSM 17290 / CCUG 55495 / CIP 109462 / JCM 13490 / 255-15), this protein is NADPH-dependent 7-cyano-7-deazaguanine reductase.